Consider the following 152-residue polypeptide: Vasotocin-neurophysin VT 1 (152 aa).

The N-terminal stretch at methionine 1–alanine 19 is a signal peptide. Cysteine 20 and cysteine 25 are joined by a disulfide. Glycine 28 is modified (glycine amide). Cystine bridges form between cysteine 40/cysteine 84, cysteine 43/cysteine 57, cysteine 51/cysteine 74, cysteine 58/cysteine 64, cysteine 91/cysteine 103, cysteine 97/cysteine 115, and cysteine 104/cysteine 109.

Belongs to the vasopressin/oxytocin family.

The protein localises to the secreted. Functionally, vasotocin is an antidiuretic hormone. The chain is Vasotocin-neurophysin VT 1 from Catostomus commersonii (White sucker).